We begin with the raw amino-acid sequence, 136 residues long: Regulator of nucleoside diphosphate kinase (136 aa).

The protein belongs to the Rnk family. In terms of assembly, interacts with the RNA polymerase.

Its function is as follows. May act as an anti-Gre factor. This Escherichia coli O6:H1 (strain CFT073 / ATCC 700928 / UPEC) protein is Regulator of nucleoside diphosphate kinase.